Consider the following 378-residue polypeptide: Succinyl-diaminopimelate desuccinylase (378 aa).

His66 contacts Zn(2+). Asp68 is a catalytic residue. Asp100 contributes to the Zn(2+) binding site. The active-site Proton acceptor is Glu134. Glu135, Glu163, and His350 together coordinate Zn(2+).

The protein belongs to the peptidase M20A family. DapE subfamily. In terms of assembly, homodimer. Zn(2+) serves as cofactor. Co(2+) is required as a cofactor.

The catalysed reaction is N-succinyl-(2S,6S)-2,6-diaminopimelate + H2O = (2S,6S)-2,6-diaminopimelate + succinate. Its pathway is amino-acid biosynthesis; L-lysine biosynthesis via DAP pathway; LL-2,6-diaminopimelate from (S)-tetrahydrodipicolinate (succinylase route): step 3/3. Its function is as follows. Catalyzes the hydrolysis of N-succinyl-L,L-diaminopimelic acid (SDAP), forming succinate and LL-2,6-diaminopimelate (DAP), an intermediate involved in the bacterial biosynthesis of lysine and meso-diaminopimelic acid, an essential component of bacterial cell walls. This Hydrogenovibrio crunogenus (strain DSM 25203 / XCL-2) (Thiomicrospira crunogena) protein is Succinyl-diaminopimelate desuccinylase.